The following is a 531-amino-acid chain: Zinc finger CCCH-type with G patch domain-containing protein (531 aa).

Residue M1 is modified to N-acetylmethionine. Residues 91–133 (EAPAAARGSGSETVPKAEAGPESAAGGQEEEEGEDEEELSGTK) are disordered. A compositionally biased stretch (low complexity) spans 107–117 (AEAGPESAAGG). A compositionally biased stretch (acidic residues) spans 118 to 129 (QEEEEGEDEEEL). The C3H1-type zinc finger occupies 175–201 (KSLKPCPFFLEGKCRFKENCRFSHGQV). A disordered region spans residues 267–289 (PPLRTEATESDSDSDGTGDSSYA). Residues 333 to 379 (TRGIGSRLLTKMGYEFGKGLGRHAEGRVEPIHAVVLPRGKSLDQCVE) enclose the G-patch domain. The residue at position 373 (S373) is a Phosphoserine. Disordered regions lie at residues 385-409 (TRVG…GGRP), 426-446 (APGA…DMYH), and 509-531 (RAQE…MTEF). Residues 426–438 (APGALEAGAAPAG) show a composition bias toward low complexity. The segment covering 518-531 (EQRKADTHKKMTEF) has biased composition (basic and acidic residues).

As to quaternary structure, interacts with CHD4/Mi-2; the interaction is direct. Post-translationally, ubiquitinated in case of infection by HIV-1, leading to its degradation. Ubiquitination is mediated by the CUL4A-RBX1-DDB1-DCAF1/VPRBP complex that is hijacked by HIV-1 via interaction between HIV-1 Vpr and DCAF1/VPRBP. Widely expressed.

The protein localises to the nucleus. Its function is as follows. Transcription repressor that specifically binds the 5'-GGAG[GA]A[GA]A-3' consensus sequence. Represses transcription by recruiting the chromatin multiprotein complex NuRD to target promoters. Negatively regulates expression of EGFR, a gene involved in cell proliferation, survival and migration. Its ability to repress genes of the EGFR pathway suggest it may act as a tumor suppressor. Able to suppress breast carcinogenesis. Functionally, antagonizes the transcription repression by isoform 1 by competing for the binding of the NuRD complex. Does not bind DNA. In Homo sapiens (Human), this protein is Zinc finger CCCH-type with G patch domain-containing protein (ZGPAT).